The chain runs to 327 residues: Beta-ketoacyl-[acyl-carrier-protein] synthase III (327 aa).

Catalysis depends on residues Cys-114 and His-254. Positions 255–259 are ACP-binding; that stretch reads QANRR. Residue Asn-284 is part of the active site.

The protein belongs to the thiolase-like superfamily. FabH family. In terms of assembly, homodimer.

It is found in the cytoplasm. The catalysed reaction is malonyl-[ACP] + acetyl-CoA + H(+) = 3-oxobutanoyl-[ACP] + CO2 + CoA. The protein operates within lipid metabolism; fatty acid biosynthesis. Catalyzes the condensation reaction of fatty acid synthesis by the addition to an acyl acceptor of two carbons from malonyl-ACP. Catalyzes the first condensation reaction which initiates fatty acid synthesis and may therefore play a role in governing the total rate of fatty acid production. Possesses both acetoacetyl-ACP synthase and acetyl transacylase activities. Its substrate specificity determines the biosynthesis of branched-chain and/or straight-chain of fatty acids. The protein is Beta-ketoacyl-[acyl-carrier-protein] synthase III of Lactobacillus helveticus (strain DPC 4571).